We begin with the raw amino-acid sequence, 40 residues long: Photosystem II reaction center protein J (40 aa).

Residues 8 to 28 (IPLWIIGTVAGIVVIGLIGLF) form a helical membrane-spanning segment.

Belongs to the PsbJ family. As to quaternary structure, PSII is composed of 1 copy each of membrane proteins PsbA, PsbB, PsbC, PsbD, PsbE, PsbF, PsbH, PsbI, PsbJ, PsbK, PsbL, PsbM, PsbT, PsbX, PsbY, PsbZ, Psb30/Ycf12, at least 3 peripheral proteins of the oxygen-evolving complex and a large number of cofactors. It forms dimeric complexes.

The protein resides in the plastid. It localises to the chloroplast thylakoid membrane. Functionally, one of the components of the core complex of photosystem II (PSII). PSII is a light-driven water:plastoquinone oxidoreductase that uses light energy to abstract electrons from H(2)O, generating O(2) and a proton gradient subsequently used for ATP formation. It consists of a core antenna complex that captures photons, and an electron transfer chain that converts photonic excitation into a charge separation. In Pisum sativum (Garden pea), this protein is Photosystem II reaction center protein J.